Consider the following 4493-residue polypeptide: Mucin-17 (4493 aa).

The signal sequence occupies residues 1 to 25 (MPRPGTMALCLLTLVLSLLPPQAAA). Topologically, residues 26-4393 (EQDLSVNRAV…QGTQKSLVYG (4368 aa)) are extracellular. The span at 88–105 (NPEMTSIESSVTSDTPGV) shows a compositional bias: polar residues. 4 disordered regions span residues 88–159 (NPEM…SISS), 188–223 (LTTSTQASSSPTTPESTTIPKSTNSEGSTPLTSMPA), 248–277 (TISAQASSSPTTAEGPSLSNSAPSGGSTPL), and 306–344 (VITSTEASSSPTTAEGTSIPTSTYTEGSTPLTSTPASTM). Over residues 106–146 (SSTRMTPTESRTTSESTSDSTTLFPSSTEDTSSPTTPEGTD) the composition is skewed to low complexity. Polar residues predominate over residues 148–159 (PMSTPSEESISS). A run of 57 repeats spans residues 185–245 (STPL…EIST), 246–300 (PVTI…TTPA), 301–361 (ATNI…PVDT), 362–418 (STLV…TIPV), 420–477 (SKTF…TTPV), 479–538 (SKTQ…PVDT), 539–597 (STPV…PADS), 598–654 (NTFV…TTPV), 656–715 (SNTP…PVDT), 716–774 (STPV…PLDT), 775–831 (STHI…TTPV), 833–892 (SNSP…PVDT), 893–951 (STPV…PVDT), 952–1010 (STPV…PVDS), 1011–1069 (NTPL…PADT), 1070–1121 (STPV…ASTL), 1122–1187 (STTP…PVDS), 1188–1246 (KTQV…PVDT), 1247–1305 (STPV…PVDT), 1306–1364 (KGPV…PVDN), 1365–1423 (STPV…PVDT), 1424–1482 (STPG…PVDS), 1483–1541 (NSPV…PAVT), 1542–1600 (STPV…PIDS), 1601–1656 (KTQV…TTPV), 1658–1717 (SNSP…PVDN), 1718–1776 (STPV…PIDT), 1777–1835 (STPV…PVDS), 1836–1895 (NSPV…AVTS), 1896–1951 (TPVT…TTLA), 1953–2012 (TRTP…PVDT), 2013–2071 (STPA…PVDS), 2072–2127 (KTQV…TTPV), 2129–2188 (SNSP…PVDT), 2189–2247 (STPV…PVDT), 2248–2306 (STPV…PVDS), 2307–2365 (NTPF…PADT), 2366–2424 (STPV…PVDT), 2425–2483 (STPV…PVDT), 2484–2540 (STPM…TTPV), 2542–2601 (SNSP…PVDT), 2602–2653 (SIPV…ASTL), 2654–2719 (STTP…PVDT), 2720–2770 (STPV…EAST), 2772–2837 (STTA…PVDT), 2838–2896 (STPV…PVDT), 2897–2955 (SIPV…PVDT), 2956–3014 (RTPV…PADT), 3015–3073 (STPV…PVDS), 3074–3132 (NSPV…PVDT), 3133–3191 (STPV…PVDT), 3192–3247 (STPV…TTPV), 3249–3308 (SNTP…PADT), 3309–3367 (STPV…PVDT), 3368–3426 (STPV…PVDS), 3427–3485 (NTLV…PVDT), and 3486–3544 (STPV…PVDS). The tract at residues 185–3727 (STPLTTSTQA…SVVTSTPVTT (3543 aa)) is 59 X approximate tandem repeats. The span at 188–210 (LTTSTQASSSPTTPESTTIPKST) shows a compositional bias: low complexity. Positions 211–223 (NSEGSTPLTSMPA) are enriched in polar residues. Low complexity predominate over residues 308-323 (TSTEASSSPTTAEGTS). The segment covering 324-344 (IPTSTYTEGSTPLTSTPASTM) has biased composition (polar residues). Over residues 425–441 (TTASEASSSPTTAEDTS) the composition is skewed to low complexity. Disordered stretches follow at residues 425–629 (TTAS…ERGT), 644–868 (SEAS…TPLT), 886–1104 (STTP…TPLT), 1116–1163 (SEAS…TPLA), 1175–1279 (SEAN…GSTL), and 1296–1338 (STLL…GRTP). Polar residues predominate over residues 442–483 (IATSTPSEGSTPLTSMPVSTTPVASSEASNLSTTPVDSKTQV). N-linked (GlcNAc...) asparagine glycosylation is present at N471. Over residues 484–497 (TTSTEASSSPPTAE) the composition is skewed to low complexity. Residues 498 to 528 (VNSMPTSTPSEGSTPLTSMSVSTMPVASSEA) show a composition bias toward polar residues. Low complexity-rich tracts occupy residues 529 to 573 (STLS…TPLT) and 584 to 618 (SSEASTTSTTPADSNTFVTTSSEASSSSTTAEGTS). Composition is skewed to polar residues over residues 619–629 (MPTSTYSERGT) and 644–660 (SEASTLSTTPVDSNTPV). Positions 661 to 677 (TTSTEATSSSTTAEGTS) are enriched in low complexity. Residues 678-705 (MPTSTYTEGSTPLTSMPVNTTLVASSEA) are compositionally biased toward polar residues. A glycan (N-linked (GlcNAc...) asparagine) is linked at N696. Positions 706–733 (STLSTTPVDTSTPVTTSTEASSSPTTAD) are enriched in low complexity. Residues 737–754 (MPTSTPSEGSTPLTSMPV) are compositionally biased toward polar residues. Positions 755–776 (SKTLLTSSEASTLSTTPLDTST) are enriched in low complexity. Over residues 777–832 (HITTSTEASCSPTTTEGTSMPISTPSEGSPLLTSIPVSITPVTSPEASTLSTTPVD) the composition is skewed to polar residues. Positions 833–849 (SNSPVTTSTEVSSSPTP) are enriched in low complexity. Positions 854-868 (SMPTSTYSEGRTPLT) are enriched in polar residues. Residues 886 to 900 (STTPVDTSTPVTNST) are compositionally biased toward low complexity. N898 is a glycosylation site (N-linked (GlcNAc...) asparagine). Residues 901 to 944 (EARSSPTTSEGTSMPTSTPGEGSTPLTSMPDSTTPVVSSEARTL) are compositionally biased toward polar residues. A compositionally biased stretch (low complexity) spans 945 to 972 (SATPVDTSTPVTTSTEATSSPTTAEGTS). Positions 973-1011 (IPTSTPSEGTTPLTSTPVSHTLVANSEASTLSTTPVDSN) are enriched in polar residues. Residues 1012–1021 (TPLTTSTEAS) show a composition bias toward low complexity. Polar residues predominate over residues 1029-1062 (GTSMPTSTPSEGSTPLTRMPVSTTMVASSETSTL). Low complexity predominate over residues 1063–1090 (STTPADTSTPVTTYSQASSSSTTADGTS). Polar residues-rich tracts occupy residues 1091-1104 (MPTSTYSEGSTPLT) and 1116-1132 (SEASTLSTTPVDTSIPV). Over residues 1133 to 1149 (TTSTEASSSPTTAEGTS) the composition is skewed to low complexity. Polar residues-rich tracts occupy residues 1175-1198 (SEANTLSTTPVDSKTQVATSTEAS) and 1205-1222 (EVTSMPTSTPGERSTPLT). The span at 1237-1279 (STLSTSPVDTSTPVTTSAETSSSPTTAEGTSLPTSTTSEGSTL) shows a compositional bias: low complexity. 2 stretches are compositionally biased toward polar residues: residues 1310–1320 (VTSNEVSSSPT) and 1326–1338 (SMPTSTYSEGRTP). The N-linked (GlcNAc...) asparagine glycan is linked to N1345. Residues 1360-1394 (TPVDNSTPVTTSTEACSSPTTSEGTSMPNSNPSEG) show a composition bias toward polar residues. 20 disordered regions span residues 1360–1516 (TPVD…STAL), 1537–1575 (TPAVTSTPVTTYSQASSSPTTADGTSMQTSTYSEGSTPL), 1590–1930 (ANTL…PLTS), 1947–2163 (STTL…RTPL), 2177–2281 (AIST…TTPL), 2295–2501 (EVST…TTAE), 2524–2630 (TTPV…TPSE), 2647–2693 (SSEA…RSTP), 2709–2751 (ASTL…DGST), 2765–2853 (SSEA…SPTT), 2879–2925 (TPVA…TPSE), 2942–3167 (GSEA…TPLT), 3182–3577 (STLS…GSSS), 3589–3635 (TSSE…EVST), 3667–3701 (ITSTQVSSSPVTPEGTTMPIWTPSEGSTPLTTMPV), 3785–3812 (MTTASEGSSSPTTLEGTTTMPMSTTSER), 3829–3849 (PSEASTLSTPPGDTSTPLLTS), 3892–3914 (ASIASTPPLDTSTTFTPSTDTAS), 3965–3988 (VITSTELNTPSTSSSSTTTSFSTT), and 4008–4129 (STAP…TPTV). 2 stretches are compositionally biased toward low complexity: residues 1395-1415 (TTPLTSIPVSTTPVVSSEAST) and 1423-1442 (TSTPGTTSAEATSSPTTAEG). The span at 1461-1483 (PVSNTPVANSEASTLSTTPVDSN) shows a compositional bias: polar residues. The segment covering 1484 to 1499 (SPVVTSTAVSSSPTPA) has biased composition (low complexity). Over residues 1504–1516 (IAISTPSEGSTAL) the composition is skewed to polar residues. Over residues 1537 to 1547 (TPAVTSTPVTT) the composition is skewed to low complexity. Composition is skewed to polar residues over residues 1548–1575 (YSQASSSPTTADGTSMQTSTYSEGSTPL) and 1590–1604 (ANTLSTTPIDSKTQV). A compositionally biased stretch (low complexity) spans 1605–1620 (TASTEASSSTTAEGSS). Composition is skewed to polar residues over residues 1621-1673 (MTIS…SSPT) and 1679-1775 (SMPT…TPID). The span at 1776–1797 (TSTPVTTSTEATSSPTTAEGTS) shows a compositional bias: low complexity. Residues 1798–1836 (IPTSTLSEGMTPLTSTPVSHTLVANSEASTLSTTPVDSN) show a composition bias toward polar residues. Low complexity predominate over residues 1837 to 1852 (SPVVTSTAVSSSPTPA). Positions 1856–1883 (SIATSTPSEGSTALTSIPVSTTTVASSE) are enriched in polar residues. A compositionally biased stretch (low complexity) spans 1884-1900 (TNTLSTTPAVTSTPVTT). Polar residues-rich tracts occupy residues 1901-1921 (YAQVSSSPTTADGSSMPTSTP) and 1947-1976 (STTLADTRTPVTTYSQASSSPTTADGTSMP). A compositionally biased stretch (low complexity) spans 1984-2033 (STPLTSMPLSTTLVVSSEASTLSTTPVDTSTPATTSTEGSSSPTTAGGTS). 2 stretches are compositionally biased toward polar residues: residues 2034-2043 (IQTSTPSERT) and 2051-2077 (VSTTLVVSSEGNTLSTTPVDSKTQVTN). Residue N2077 is glycosylated (N-linked (GlcNAc...) asparagine). Low complexity predominate over residues 2078-2091 (STEASSSATAEGSS). Residues 2092-2156 (MTISAPSEGS…EGTSMQTSTY (65 aa)) are compositionally biased toward polar residues. A compositionally biased stretch (low complexity) spans 2177–2196 (AISTLSTTPVDTSTPVTNST). Residue N2194 is glycosylated (N-linked (GlcNAc...) asparagine). The span at 2197–2240 (EARSSPTTSEGTSMPTSTPSEGSTPFTSMPVSTMPVVTSEASTL) shows a compositional bias: polar residues. The segment covering 2241 to 2268 (SATPVDTSTPVTTSTEATSSPTTAEGTS) has biased composition (low complexity). Composition is skewed to polar residues over residues 2269–2281 (IPTSTLSEGTTPL) and 2295–2307 (EVSTLSTTPVDSN). Residues 2308 to 2317 (TPFTTSTEAS) are compositionally biased toward low complexity. The segment covering 2325–2358 (GTSMPTSTSSEGNTPLTRMPVSTTMVASFETSTL) has biased composition (polar residues). A compositionally biased stretch (low complexity) spans 2359–2371 (STTPADTSTPVTT). Polar residues predominate over residues 2372 to 2395 (YSQAGSSPTTADDTSMPTSTYSEG). Composition is skewed to low complexity over residues 2396 to 2445 (STPL…EGTS) and 2462 to 2499 (PVSTTPVVSSEAGTLSTTPVDTSTPMTTSTEASSSPTT). The span at 2524-2547 (TTPVASPEASTLSTTPVDSNSPVV) shows a compositional bias: polar residues. The span at 2548 to 2563 (TSTEISSSATSAEGTS) shows a compositional bias: low complexity. Residues 2564–2576 (MPTSTYSEGSTPL) show a composition bias toward polar residues. Residues 2586 to 2617 (LASSEASTLSTTPVDTSIPVTTSTETSSSPTT) show a composition bias toward low complexity. Positions 2618 to 2628 (AKDTSMPISTP) are enriched in polar residues. Residues 2654 to 2681 (STTPVDTRTLVTTSTGTSSSPTTAEGSS) show a composition bias toward low complexity. The span at 2682-2693 (MPTSTPGERSTP) shows a compositional bias: polar residues. Residues 2710-2740 (STLSTTPVDTSTPVTTSAEASSSPTTAEGTS) are compositionally biased toward low complexity. Positions 2741–2751 (MRISTPSDGST) are enriched in polar residues. Composition is skewed to low complexity over residues 2765–2816 (SSEA…TSMP) and 2829–2853 (TLSTTPVDTSTPVTTSTKASSSPTT). Over residues 2879–2900 (TPVASSEASTLSTTPVDTSIPV) the composition is skewed to polar residues. Composition is skewed to low complexity over residues 2901-2917 (TTSTEGSSSPTTAEGTS) and 2950-2976 (TTPVDTRTPVTTSAEASSSPTTAEGTS). Polar residues predominate over residues 2988 to 3009 (PLTSMSVSTMPVASSEASTLSR). The segment covering 3010 to 3031 (TPADTSTPVTTSTEASSSPTTA) has biased composition (low complexity). A compositionally biased stretch (polar residues) spans 3037–3057 (PISTPSEGSTPLTSIPVSTTP). Low complexity-rich tracts occupy residues 3073–3089 (SNSPVVTSTEVSSSPTP) and 3104–3140 (STPLTGVPVSTTPVTSSAISTLSTTPVDTSTPVTTST). The segment covering 3141–3166 (EAHSSPTTSEGTSMPTSTPSEGSTPL) has biased composition (polar residues). Residues 3185–3211 (SATPVDTSTPVTTSTEATSSTTAEGTS) are compositionally biased toward low complexity. The segment covering 3212–3253 (IPTSTPSEGMTPLTSVPVSNTPVASSEASILSTTPVDSNTPL) has biased composition (polar residues). Residues 3254 to 3267 (TTSTEASSSPPTAE) show a composition bias toward low complexity. A compositionally biased stretch (polar residues) spans 3268-3288 (GTSMPTSTPSEGSTPLTSMPV). A compositionally biased stretch (low complexity) spans 3289–3314 (STTTVASSETSTLSTTPADTSTPVTT). Residues 3329 to 3357 (SMPTSTYSEGSTPLTNMSFSTTPVVSSEA) show a composition bias toward polar residues. N3344 is a glycosylation site (N-linked (GlcNAc...) asparagine). Residues 3358–3375 (STLSTTPVDTSTPVTTST) are compositionally biased toward low complexity. A compositionally biased stretch (polar residues) spans 3376–3401 (EASLSPTTAEGTSIPTSSPSEGTTPL). Residues 3405 to 3414 (PVSTTPVVSS) are compositionally biased toward low complexity. Composition is skewed to polar residues over residues 3415–3441 (EVNTLSTTPVDSNTLVTTSTEASSSPT) and 3447–3475 (SLPTSTTSEGSTPLSIMPLSTTPVASSEA). A compositionally biased stretch (low complexity) spans 3476–3501 (STLSTTPVDTSTPVTTSSPTNSSPTT). 2 stretches are compositionally biased toward polar residues: residues 3502–3549 (AEVT…TFVT) and 3558–3571 (PATLQVTTMRMSTP). A compositionally biased stretch (low complexity) spans 3589–3616 (TSSEASTPSTPSVDRSTPVTTSTQSNST). 2 consecutive repeat copies span residues 3604 to 3662 (STPV…PVDT) and 3663 to 3727 (STPV…PVTT). The segment covering 3626-3635 (PMSTPSEVST) has biased composition (polar residues). Positions 3667 to 3679 (ITSTQVSSSPVTP) are enriched in low complexity. Polar residues-rich tracts occupy residues 3690–3701 (SEGSTPLTTMPV) and 3785–3806 (MTTASEGSSSPTTLEGTTTMPM). Composition is skewed to low complexity over residues 3967–3988 (TSTELNTPSTSSSSTTTSFSTT), 4008–4083 (STAP…SSTT), and 4090–4129 (TTMTTRTKPSTRTTSFPTVTTTAVPTNTTIKSNPTSTPTV). N-linked (GlcNAc...) asparagine glycosylation occurs at N4116. The region spanning 4131–4170 (RTTTCFGDGCQNTASRCKNGGTWDGLKCQCPNLYYGELCE) is the EGF-like domain. 3 cysteine pairs are disulfide-bonded: C4135–C4147, C4140–C4158, and C4160–C4169. The SEA domain maps to 4184–4291 (ISAQMELTVT…QQIMINDICS (108 aa)). 5 N-linked (GlcNAc...) asparagine glycosylation sites follow: N4205, N4236, N4267, N4297, and N4305. A helical transmembrane segment spans residues 4394-4414 (LVGAGVVLMLIILVALLMLVF). Residues 4415–4493 (RSKREVKRQK…QRPQVMTTSF (79 aa)) are Cytoplasmic-facing.

As to quaternary structure, interacts via its C-terminus with PDZK1 and this interaction appears important for proper localization. Post-translationally, probably cleaved within the SEA domain. In terms of processing, N-glycosylated. Contains high mannose and complex-type glycans. The forms containing the complex type glycans localize to the cell surface. Not O-glycosylated. As to expression, expressed almost exclusively in the intestine. Expression is especially high in both the duodenum and transverse colon. Expressed in mature absorptive cells of the small intestinal villi. No expression is detected in goblet cells. Highly expressed in pancreatic adenocarcinoma tissue (at protein level). Expression is not detectable in normal pancreas, in pancreatitis or in cell lines derived from other cancers.

The protein resides in the cell membrane. Its subcellular location is the secreted. Functionally, probably plays a role in maintaining homeostasis on mucosal surfaces. The sequence is that of Mucin-17 (MUC17) from Homo sapiens (Human).